Consider the following 503-residue polypeptide: Capsanthin/capsorubin synthase, chromoplastic (503 aa).

88-117 lines the NAD(+) pocket; it reads VIIIGTGPAGLRLAEQVSSRHSVKVCCVDP.

This sequence belongs to the lycopene cyclase family.

The protein localises to the plastid. Its subcellular location is the chromoplast. It catalyses the reaction all-trans-violaxanthin = all-trans-capsorubin. The catalysed reaction is all-trans-antheraxanthin = all-trans-capsanthin. Its pathway is carotenoid biosynthesis; capsanthin biosynthesis; capsanthin from antheraxanthin: step 1/1. It functions in the pathway carotenoid biosynthesis; capsorubin biosynthesis; capsorubin from violaxanthin: step 1/1. Functionally, catalyzes the conversion of the ubiquitous 5,6-epoxycarotenoids, antheraxanthin and violaxanthin, into capsanthin and capsorubin, respectively. The chain is Capsanthin/capsorubin synthase, chromoplastic (CCS) from Citrus sinensis (Sweet orange).